An 86-amino-acid chain; its full sequence is Small ribosomal subunit protein bS16c (86 aa).

It belongs to the bacterial ribosomal protein bS16 family.

It is found in the plastid. Its subcellular location is the chloroplast. The chain is Small ribosomal subunit protein bS16c from Liriodendron tulipifera (Tuliptree).